A 449-amino-acid chain; its full sequence is MYHIWIKFLAAWIFLKRFNGVHVMQAKAPMYRNEPFLVFWNAPTTQCRLRYKVDLDLKTFHIVSNANDSLSGSAVTIFYPNHLGVYPHIDDRGHFFHGIIPQNESLTKHLNKSKSDINRIIPLKAFHGLGVIDWENWRPQWDRNWGSKNVYRNRSIQFARDLHPELSEDKIRRLAKKEYEKAAKSFMRDTLLLAEEMRPDGYWGYYLYPDCQNYDYKTKGDQYTGKCPEIEMSRNDQLLWLWRDSTALFPNVYLEIILRSSDNALKFVHHRLKEAMRIASMAREDYALPVFAYARPFYAYTFEPLTQEDLVTTVGETAAMGAAGIVFWGSVQYASTVDSCQKVKKYMNGPLGRYIVNVTTAAKICSRVLCRKNGRCVRKHSDSNAFLHLFPESFRIMVYANATEKKVIVKGKLELENLIYLRENFMCQCYQGWKGLYCEEYSIKDIRKI.

The N-terminal stretch at 1–23 (MYHIWIKFLAAWIFLKRFNGVHV) is a signal peptide. Intrachain disulfides connect C47-C340 and C211-C227. N-linked (GlcNAc...) asparagine glycosylation is found at N67, N103, and N111. E135 (proton donor) is an active-site residue. The N-linked (GlcNAc...) asparagine glycan is linked to N153. N-linked (GlcNAc...) asparagine glycosylation is present at N357. Cystine bridges form between C365–C376, C370–C427, and C429–C438. A glycan (N-linked (GlcNAc...) asparagine) is linked at N401. Residues 427-438 (CQCYQGWKGLYC) form the EGF-like domain.

Belongs to the glycosyl hydrolase 56 family. In terms of assembly, monomer. As to expression, expressed by the venom gland.

It is found in the secreted. It catalyses the reaction Random hydrolysis of (1-&gt;4)-linkages between N-acetyl-beta-D-glucosamine and D-glucuronate residues in hyaluronate.. Snake venom endo-hyaluronidase that degrades hyaluronan to smaller oligosaccharide fragments. In venom, it is not toxic by itself, but increases the diffusion of other venom proteins by degrading the extracellular matrix. In addition, it displays antiedematogenic activity. This Cerastes cerastes (Horned desert viper) protein is Hyaluronidase-4.